The primary structure comprises 793 residues: MSNESTNCSFFLNLFMLLLLLIFYSADACQRECGGISIPYPFGIGKDCCLEKYYEIECRNTTSRKLVPLLSFINKEVVSISLPSADSHFAYEVSDQERHESFGLVRVKFPITSAGCFNDGKESGGGSKMNFTGSPFFIDRSNSLIAAGCNSKVSLMYIKPKMVGCELSCNTSKDSYSNSIPFVEAGCSSNVLPYSQDQGCPEEIAEETGCNGIGCCQASLPNEPQQVIGIRTENNDGNSTTKVECTVSAFLTDEIYALPKATKTEHLLAKRYATVSLGWVIQTSNRSFLDSLALACKDREDYRNTTNLERKCTCGRITISETSYANCGCTYGYTGNPYVLNGCKDIDECKVKFEYCGKTETCVNFEGGYRCVRDKTKAIMIGAGTGFGVLVLVGGLWWLRKFLIKRRITKRKKKFFKRNGGLLLLQELNTREGYVEKTRVFNSRELEKATENFSENRVLGHGGQGTVYKGMLVDGRTVAVKKSKVIDEDKLQEFINEVVILSQINHRHVVKLLGCCLETEVPMLVYEFIINGNLFKHIHEEESDDYTMLWGMRLRIAVDIAGALSYLHSSASSPIYHRDIKSTNILLDEKYRAKVADFGTSRSVTIDQTHWTTVISGTVGYVDPEYYQSSQYTEKSDVYSFGVILAELITGDKPVIMVQNTQEIVALAEHFRVAMKEKRLTDIIDARIRNDCKPEQVMAVAKVAMKCLSSKGKKRPNMREVFTELERICTSPEDSQVHNRIDEEEEEEEEEEEVVTTINRGDSWSISVTAPALSIVASSPSSDVEPLFPRLTW.

Residues M1–A28 form the signal peptide. Residues C29–A378 are Extracellular-facing. N-linked (GlcNAc...) asparagine glycans are attached at residues N60, N130, N170, N238, N285, and N304. The tract at residues C312–C371 is atypical EGF-like. Intrachain disulfides connect C314/C327, C349/C362, and C356/C371. A helical transmembrane segment spans residues I379 to L399. The Cytoplasmic portion of the chain corresponds to R400–W793. The Protein kinase domain maps to F453–I728. ATP-binding positions include L459–V467 and K481. Position 526 is a phosphotyrosine (Y526). D579 (proton acceptor) is an active-site residue. A phosphothreonine mark is found at T613 and T618. Y626 bears the Phosphotyrosine mark. The interval E733–T757 is disordered. Positions D742–V754 are enriched in acidic residues.

The protein belongs to the protein kinase superfamily. Ser/Thr protein kinase family.

The protein resides in the membrane. It carries out the reaction L-seryl-[protein] + ATP = O-phospho-L-seryl-[protein] + ADP + H(+). It catalyses the reaction L-threonyl-[protein] + ATP = O-phospho-L-threonyl-[protein] + ADP + H(+). Serine/threonine-protein kinase that may function as a signaling receptor of extracellular matrix component. In Arabidopsis thaliana (Mouse-ear cress), this protein is Wall-associated receptor kinase-like 18 (WAKL18).